The primary structure comprises 313 residues: Leucine zipper protein 4 (313 aa).

The interaction with DDX39B/UAP56 stretch occupies residues Met-1–Asp-119. 2 disordered regions span residues Met-1–Leu-238 and Gln-290–Thr-313. The UAP56-binding motif (UBM); required for proper nuclear localization signature appears at Lys-22–Glu-40. Over residues Ile-34 to Pro-60 the composition is skewed to basic and acidic residues. Residues Arg-51–Arg-80 form an arg-rich; required for RNA-binding region. Residues Ser-65–Ser-77 are compositionally biased toward basic residues. The segment covering Ser-81–Pro-92 has biased composition (basic and acidic residues). Residues Glu-126–Gly-141 show a composition bias toward polar residues. Residues Asn-142–Arg-168 show a composition bias toward basic and acidic residues. Over residues Ser-169–Gln-179 the composition is skewed to polar residues. The segment at Gly-178–Gly-236 is RS-containing His-rich (RS-H); necessary for nuclear localization. Residues Gly-199–His-226 are compositionally biased toward basic and acidic residues. Residue Ser-234 is modified to Phosphoserine. The tract at residues Leu-238–Leu-287 is leucine-zipper; required for RNA-binding and for its relocalization to the cytoplasm during cell division. The tract at residues Thr-241 to Thr-313 is interaction with NXF1. Over residues Tyr-304 to Thr-313 the composition is skewed to polar residues.

Interacts with NXF1, NXF2, THOC1, THOC5, DDX39B/UAP56 and SRRT. In terms of tissue distribution, expressed specifically in testis. Also expressed in a wide variety of cancer types, but particularly high levels of expression observed in melanoma cells.

The protein localises to the nucleus. It is found in the cytoplasm. Its function is as follows. Export adapter involved in mRNA nuclear export in cancer cells. Binds and enhances the RNA-binding activity of the nuclear RNA export factor NXF1. Can restore mRNA export function in cells compromised by loss of mRNA export adapters. This Homo sapiens (Human) protein is Leucine zipper protein 4 (LUZP4).